A 264-amino-acid chain; its full sequence is Glutamate racemase (264 aa).

Substrate-binding positions include D10–S11 and Y42–G43. The active-site Proton donor/acceptor is C73. N74 to T75 contacts substrate. The active-site Proton donor/acceptor is C183. Residue T184 to H185 participates in substrate binding.

It belongs to the aspartate/glutamate racemases family.

It carries out the reaction L-glutamate = D-glutamate. Its pathway is cell wall biogenesis; peptidoglycan biosynthesis. Functionally, provides the (R)-glutamate required for cell wall biosynthesis. This chain is Glutamate racemase, found in Streptococcus mutans serotype c (strain ATCC 700610 / UA159).